The sequence spans 221 residues: Ribosomal RNA large subunit methyltransferase E (221 aa).

S-adenosyl-L-methionine-binding residues include G60, W62, D89, D105, and D134. Residue K174 is the Proton acceptor of the active site.

Belongs to the class I-like SAM-binding methyltransferase superfamily. RNA methyltransferase RlmE family.

Its subcellular location is the cytoplasm. It catalyses the reaction uridine(2552) in 23S rRNA + S-adenosyl-L-methionine = 2'-O-methyluridine(2552) in 23S rRNA + S-adenosyl-L-homocysteine + H(+). Specifically methylates the uridine in position 2552 of 23S rRNA at the 2'-O position of the ribose in the fully assembled 50S ribosomal subunit. This is Ribosomal RNA large subunit methyltransferase E from Cupriavidus necator (strain ATCC 17699 / DSM 428 / KCTC 22496 / NCIMB 10442 / H16 / Stanier 337) (Ralstonia eutropha).